The sequence spans 311 residues: Porphobilinogen deaminase (311 aa).

C245 bears the S-(dipyrrolylmethanemethyl)cysteine mark.

This sequence belongs to the HMBS family. As to quaternary structure, monomer. Dipyrromethane serves as cofactor.

The catalysed reaction is 4 porphobilinogen + H2O = hydroxymethylbilane + 4 NH4(+). The protein operates within porphyrin-containing compound metabolism; protoporphyrin-IX biosynthesis; coproporphyrinogen-III from 5-aminolevulinate: step 2/4. Tetrapolymerization of the monopyrrole PBG into the hydroxymethylbilane pre-uroporphyrinogen in several discrete steps. This is Porphobilinogen deaminase from Acinetobacter baylyi (strain ATCC 33305 / BD413 / ADP1).